A 1096-amino-acid polypeptide reads, in one-letter code: Serine-repeat antigen protein 3 (1096 aa).

The signal sequence occupies residues 1 to 21 (MARLSSIVFIICLLLCNNAIS). The interval 28 to 205 (PSSGGTLSGG…RSPPPQVNNI (178 aa)) is disordered. Low complexity predominate over residues 77-97 (NSDSTGDSSLGSTGSNGSQPA). A glycan (N-linked (GlcNAc...) asparagine) is linked at Asn92. A compositionally biased stretch (basic and acidic residues) spans 102 to 113 (KEPEPTTPKEPE). Over residues 123–147 (VTPQKTAETASGKQVSPTPSENPPS) the composition is skewed to polar residues. Basic and acidic residues predominate over residues 149 to 161 (DTPKPESSSEKKV). Residues Asn204, Asn607, Asn637, Asn662, Asn671, Asn712, Asn892, and Asn951 are each glycosylated (N-linked (GlcNAc...) asparagine). 2 disordered regions span residues 916–952 (EAKNDDENDQNYGNLDVSGQSENHQNDPKNPQPQANS) and 964–1006 (NQRT…ASAN). Composition is skewed to polar residues over residues 925-952 (QNYGNLDVSGQSENHQNDPKNPQPQANS) and 964-975 (NQRTADSNPNAQ). The segment covering 976–1006 (STPSPNTTVTDTVNSNTANSNTANSNTASAN) has biased composition (low complexity). N-linked (GlcNAc...) asparagine glycans are attached at residues Asn981 and Asn1039.

It belongs to the peptidase C1 family. In terms of processing, proteolytically cleaved in both blood and liver stage parasites. Precursor of 130 kDa is processed into 72 kDa and 55 kDa forms. Proteolytically cleaved by SUB1.

It is found in the cell membrane. It localises to the parasitophorous vacuole. The protein localises to the secreted. The protein resides in the host cytoplasm. Its function is as follows. Putative cysteine protease. Probably involved in merozoite release from the parasitophorous vacuole during liver stages. This Plasmodium berghei (strain Anka) protein is Serine-repeat antigen protein 3.